Consider the following 148-residue polypeptide: Large ribosomal subunit protein uL13 (148 aa).

The protein belongs to the universal ribosomal protein uL13 family. In terms of assembly, part of the 50S ribosomal subunit.

Functionally, this protein is one of the early assembly proteins of the 50S ribosomal subunit, although it is not seen to bind rRNA by itself. It is important during the early stages of 50S assembly. The polypeptide is Large ribosomal subunit protein uL13 (Ureaplasma urealyticum serovar 10 (strain ATCC 33699 / Western)).